Consider the following 1579-residue polypeptide: Pentafunctional AROM polypeptide (1579 aa).

The 3-dehydroquinate synthase stretch occupies residues 1 to 391 (MKVELSKVPI…YGTSAHVVSD (391 aa)). Residues 44–46 (DTN), 79–82 (EAHK), 110–112 (GGV), and aspartate 115 contribute to the NAD(+) site. Position 126 (arginine 126) interacts with 7-phospho-2-dehydro-3-deoxy-D-arabino-heptonate. Position 135–136 (135–136 (TS)) interacts with NAD(+). 7-phospho-2-dehydro-3-deoxy-D-arabino-heptonate-binding residues include aspartate 142 and lysine 148. Position 157 (lysine 157) interacts with NAD(+). Asparagine 158 contributes to the 7-phospho-2-dehydro-3-deoxy-D-arabino-heptonate binding site. Residues 175–178 (WLET) and asparagine 186 each bind NAD(+). Glutamate 190 contacts Zn(2+). 7-phospho-2-dehydro-3-deoxy-D-arabino-heptonate contacts are provided by residues 190–193 (EVIK) and lysine 257. Glutamate 267 functions as the Proton acceptor; for 3-dehydroquinate synthase activity in the catalytic mechanism. Residues 271–275 (RNLLN) and histidine 278 contribute to the 7-phospho-2-dehydro-3-deoxy-D-arabino-heptonate site. A Zn(2+)-binding site is contributed by histidine 278. Histidine 282 (proton acceptor; for 3-dehydroquinate synthase activity) is an active-site residue. The 7-phospho-2-dehydro-3-deoxy-D-arabino-heptonate site is built by histidine 294 and lysine 363. Histidine 294 lines the Zn(2+) pocket. An EPSP synthase region spans residues 404-862 (VYPFKTLENG…WDVLHTQLGA (459 aa)). The active-site For EPSP synthase activity is the cysteine 844. Residues 881 to 1070 (SIVIIGMRAA…IPTNRSSFVC (190 aa)) are shikimate kinase. ATP is bound at residue 886–893 (GMRAAGKT). The 3-dehydroquinase stretch occupies residues 1071 to 1283 (LTFDDLAAHK…SAPGQLTLSQ (213 aa)). The Proton acceptor; for 3-dehydroquinate dehydratase activity role is filled by histidine 1188. Residue lysine 1217 is the Schiff-base intermediate with substrate; for 3-dehydroquinate dehydratase activity of the active site. A shikimate dehydrogenase region spans residues 1296-1579 (AKNFYVVGSP…IYSAVTEEQA (284 aa)).

The protein in the N-terminal section; belongs to the sugar phosphate cyclases superfamily. Dehydroquinate synthase family. This sequence in the 2nd section; belongs to the EPSP synthase family. In the 3rd section; belongs to the shikimate kinase family. It in the 4th section; belongs to the type-I 3-dehydroquinase family. The protein in the C-terminal section; belongs to the shikimate dehydrogenase family. In terms of assembly, homodimer. Zn(2+) is required as a cofactor.

It is found in the cytoplasm. The catalysed reaction is 7-phospho-2-dehydro-3-deoxy-D-arabino-heptonate = 3-dehydroquinate + phosphate. The enzyme catalyses 3-dehydroquinate = 3-dehydroshikimate + H2O. It carries out the reaction shikimate + NADP(+) = 3-dehydroshikimate + NADPH + H(+). It catalyses the reaction shikimate + ATP = 3-phosphoshikimate + ADP + H(+). The catalysed reaction is 3-phosphoshikimate + phosphoenolpyruvate = 5-O-(1-carboxyvinyl)-3-phosphoshikimate + phosphate. It functions in the pathway metabolic intermediate biosynthesis; chorismate biosynthesis; chorismate from D-erythrose 4-phosphate and phosphoenolpyruvate: step 2/7. It participates in metabolic intermediate biosynthesis; chorismate biosynthesis; chorismate from D-erythrose 4-phosphate and phosphoenolpyruvate: step 3/7. The protein operates within metabolic intermediate biosynthesis; chorismate biosynthesis; chorismate from D-erythrose 4-phosphate and phosphoenolpyruvate: step 4/7. Its pathway is metabolic intermediate biosynthesis; chorismate biosynthesis; chorismate from D-erythrose 4-phosphate and phosphoenolpyruvate: step 5/7. It functions in the pathway metabolic intermediate biosynthesis; chorismate biosynthesis; chorismate from D-erythrose 4-phosphate and phosphoenolpyruvate: step 6/7. Its function is as follows. The AROM polypeptide catalyzes 5 consecutive enzymatic reactions in prechorismate polyaromatic amino acid biosynthesis. The sequence is that of Pentafunctional AROM polypeptide from Lachancea thermotolerans (strain ATCC 56472 / CBS 6340 / NRRL Y-8284) (Yeast).